A 328-amino-acid polypeptide reads, in one-letter code: Glycerol-3-phosphate dehydrogenase [NAD(P)+] (328 aa).

Residues Trp-11, Arg-30, and Lys-103 each contribute to the NADPH site. Sn-glycerol 3-phosphate contacts are provided by Lys-103, Gly-132, and Ser-134. Ala-136 is a binding site for NADPH. Positions 187, 240, 250, 251, and 252 each coordinate sn-glycerol 3-phosphate. Catalysis depends on Lys-187, which acts as the Proton acceptor. Arg-251 provides a ligand contact to NADPH. NADPH-binding residues include Val-275 and Glu-277.

Belongs to the NAD-dependent glycerol-3-phosphate dehydrogenase family.

The protein resides in the cytoplasm. It catalyses the reaction sn-glycerol 3-phosphate + NAD(+) = dihydroxyacetone phosphate + NADH + H(+). The catalysed reaction is sn-glycerol 3-phosphate + NADP(+) = dihydroxyacetone phosphate + NADPH + H(+). It functions in the pathway membrane lipid metabolism; glycerophospholipid metabolism. Functionally, catalyzes the reduction of the glycolytic intermediate dihydroxyacetone phosphate (DHAP) to sn-glycerol 3-phosphate (G3P), the key precursor for phospholipid synthesis. This chain is Glycerol-3-phosphate dehydrogenase [NAD(P)+], found in Aromatoleum aromaticum (strain DSM 19018 / LMG 30748 / EbN1) (Azoarcus sp. (strain EbN1)).